A 733-amino-acid chain; its full sequence is Polyribonucleotide nucleotidyltransferase (733 aa).

A disordered region spans residues 404–424 (NYNMPPYSTGETGRVGSPKRR). Mg(2+)-binding residues include Asp-516 and Asp-522. The KH domain maps to 582-641 (PRIITVHIPVDKIGEVIGPKGKMINQIQDDTGANISIEDDGTIFIGADNGDSAESARSMI). The region spanning 653–725 (GERYLGTVVK…DRGKLSLVLA (73 aa)) is the S1 motif domain.

It belongs to the polyribonucleotide nucleotidyltransferase family. It depends on Mg(2+) as a cofactor.

The protein localises to the cytoplasm. The catalysed reaction is RNA(n+1) + phosphate = RNA(n) + a ribonucleoside 5'-diphosphate. Its function is as follows. Involved in mRNA degradation. Catalyzes the phosphorolysis of single-stranded polyribonucleotides processively in the 3'- to 5'-direction. The sequence is that of Polyribonucleotide nucleotidyltransferase from Cutibacterium acnes (strain DSM 16379 / KPA171202) (Propionibacterium acnes).